A 385-amino-acid chain; its full sequence is Chaperone protein DnaJ (385 aa).

Positions 5-70 (DYYEVLGVSK…DKKAAYDRFG (66 aa)) constitute a J domain. A CR-type zinc finger spans residues 143–221 (GLSKQITVPS…CGGAGRQEKD (79 aa)). The Zn(2+) site is built by Cys-156, Cys-159, Cys-173, Cys-176, Cys-195, Cys-198, Cys-209, and Cys-212. CXXCXGXG motif repeat units lie at residues 156–163 (CSSCDGTG), 173–180 (CPTCSGMG), 195–202 (CPTCNGMG), and 209–216 (CRTCGGAG). The interval 299–323 (GGRSRVRVPEGSQSGRQMRLRGKGM) is disordered.

Belongs to the DnaJ family. Homodimer. Zn(2+) serves as cofactor.

The protein resides in the cytoplasm. Participates actively in the response to hyperosmotic and heat shock by preventing the aggregation of stress-denatured proteins and by disaggregating proteins, also in an autonomous, DnaK-independent fashion. Unfolded proteins bind initially to DnaJ; upon interaction with the DnaJ-bound protein, DnaK hydrolyzes its bound ATP, resulting in the formation of a stable complex. GrpE releases ADP from DnaK; ATP binding to DnaK triggers the release of the substrate protein, thus completing the reaction cycle. Several rounds of ATP-dependent interactions between DnaJ, DnaK and GrpE are required for fully efficient folding. Also involved, together with DnaK and GrpE, in the DNA replication of plasmids through activation of initiation proteins. The sequence is that of Chaperone protein DnaJ from Jannaschia sp. (strain CCS1).